The sequence spans 298 residues: Anamorsin homolog (298 aa).

The tract at residues 1 to 143 is N-terminal SAM-like domain; it reads MTQLIITYQS…IKAEKPSWKP (143 aa). The linker stretch occupies residues 143–162; the sequence is PEEGKVLVDDIDLEGSVPDI. [2Fe-2S] cluster contacts are provided by Cys-175, Cys-182, Cys-185, and Cys-187. The segment at 175-187 is fe-S binding site A; that stretch reads CKSKERACNNCNC. [4Fe-4S] cluster-binding residues include Cys-218, Cys-221, Cys-229, and Cys-232. 2 short sequence motifs (cx2C motif) span residues 218-221 and 229-232; these read CGNC and CSGC. Residues 218 to 232 are fe-S binding site B; sequence CGNCYLGDAFRCSGC.

It belongs to the anamorsin family. As to quaternary structure, monomer. It depends on [2Fe-2S] cluster as a cofactor. Requires [4Fe-4S] cluster as cofactor.

The protein localises to the cytoplasm. The protein resides in the mitochondrion intermembrane space. Component of the cytosolic iron-sulfur (Fe-S) protein assembly (CIA) machinery. Required for the maturation of extramitochondrial Fe-S proteins. Part of an electron transfer chain functioning in an early step of cytosolic Fe-S biogenesis, facilitating the de novo assembly of a [4Fe-4S] cluster on the cytosolic Fe-S scaffold complex. Electrons are transferred from NADPH via a FAD- and FMN-containing diflavin oxidoreductase. Together with the diflavin oxidoreductase, also required for the assembly of the diferric tyrosyl radical cofactor of ribonucleotide reductase (RNR), probably by providing electrons for reduction during radical cofactor maturation in the catalytic small subunit. This Cryptosporidium hominis protein is Anamorsin homolog.